Reading from the N-terminus, the 540-residue chain is Pentatricopeptide repeat-containing protein At1g80880, mitochondrial (540 aa).

A mitochondrion-targeting transit peptide spans 1–87; that stretch reads MAAIVAIGRK…ETFDINLTAL (87 aa). PPR repeat units follow at residues 154–184, 188–222, 223–253, 257–292, 293–327, 328–362, 363–397, 402–428, 429–463, and 464–498; these read DQKSCDLMIWVLGNHQKFNIAWCLIRDMFNV, TRKAMFLMMDRYAAANDTSQAIRTFDIMDKFKHTP, YDEAFQGLLCALCRHGHIEKAEEFMLASKKL, DVEGFNVILNGWCNIWTDVTEAKRIWREMGNYCITP, NKDSYSHMISCFSKVGNLFDSLRLYDEMKKRGLAP, GIEVYNSLVYVLTREDCFDEAMKLMKKLNEEGLKP, DSVTYNSMIRPLCEAGKLDVARNVLATMISENLSP, FHAFLEAVNFEKTLEVLGQMKISDLGP, TEETFLLILGKLFKGKQPENALKIWAEMDRFEIVA, and NPALYLATIQGLLSCGWLEKAREIYSEMKSKGFVG. The interval 514-540 is disordered; the sequence is VRKSKRMNLQKVGSQEGYKGQRSVDRK.

This sequence belongs to the PPR family. P subfamily.

The protein localises to the mitochondrion. This Arabidopsis thaliana (Mouse-ear cress) protein is Pentatricopeptide repeat-containing protein At1g80880, mitochondrial.